A 396-amino-acid chain; its full sequence is Methionine import ATP-binding protein MetN 2 (396 aa).

An ABC transporter domain is found at 41–280; that stretch reads VSFELVGKVF…PRHGATRALL (240 aa). 77–84 is an ATP binding site; sequence GRSGAGKS.

This sequence belongs to the ABC transporter superfamily. Methionine importer (TC 3.A.1.24) family. The complex is composed of two ATP-binding proteins (MetN), two transmembrane proteins (MetI) and a solute-binding protein (MetQ).

It localises to the cell inner membrane. The catalysed reaction is L-methionine(out) + ATP + H2O = L-methionine(in) + ADP + phosphate + H(+). The enzyme catalyses D-methionine(out) + ATP + H2O = D-methionine(in) + ADP + phosphate + H(+). In terms of biological role, part of the ABC transporter complex MetNIQ involved in methionine import. Responsible for energy coupling to the transport system. The sequence is that of Methionine import ATP-binding protein MetN 2 from Burkholderia pseudomallei (strain 1710b).